We begin with the raw amino-acid sequence, 273 residues long: Outer capsid protein VP7 (273 aa).

This sequence belongs to the aquareoviridae outer capsid VP7 protein family. Interacts with VP4 and VP6.

It localises to the virion. Interacts with VP4 to form the outer icosahedral capsid with an incomplete T=13 symmetry, about 80 nm in diameter, and consisting of 200 VP4-VP7 trimers. In Ctenopharyngodon idella (Grass carp), this protein is Outer capsid protein VP7 (S10).